A 103-amino-acid polypeptide reads, in one-letter code: Small ribosomal subunit protein uS10 (103 aa).

It belongs to the universal ribosomal protein uS10 family. In terms of assembly, part of the 30S ribosomal subunit.

In terms of biological role, involved in the binding of tRNA to the ribosomes. The protein is Small ribosomal subunit protein uS10 of Azoarcus sp. (strain BH72).